The following is a 321-amino-acid chain: Ribonucleoside-diphosphate reductase small subunit (321 aa).

The Fe cation site is built by Asp-78, Glu-108, and His-111. The active site involves Tyr-115. The chain crosses the membrane as a helical span at residues 165–185 (ILMILIEGLFFASSFASIAYL). Fe cation contacts are provided by Glu-171, Glu-205, and His-208.

Belongs to the ribonucleoside diphosphate reductase small chain family. Heterotetramer composed of a homodimer of the large subunit (R1) and a homodimer of the small subunit (R2). Larger multisubunit protein complex are also active, composed of (R1)n(R2)n. Fe cation serves as cofactor.

Its subcellular location is the host membrane. The enzyme catalyses a 2'-deoxyribonucleoside 5'-diphosphate + [thioredoxin]-disulfide + H2O = a ribonucleoside 5'-diphosphate + [thioredoxin]-dithiol. Ribonucleoside-diphosphate reductase holoenzyme provides the precursors necessary for viral DNA synthesis. Allows virus growth in non-dividing cells, as well as reactivation from latency in infected hosts. Catalyzes the biosynthesis of deoxyribonucleotides from the corresponding ribonucleotides. In Equus caballus (Horse), this protein is Ribonucleoside-diphosphate reductase small subunit.